Consider the following 527-residue polypeptide: Calcium and calcium/calmodulin-dependent serine/threonine-protein kinase (527 aa).

Residues 12–314 (YEVSEILGRG…AQELLSDPWV (303 aa)) enclose the Protein kinase domain. 18 to 26 (LGRGGFSVV) lines the ATP pocket. The interval 25–51 (VVRKGTRKSNNDDEKSQSQSKSQSQSQ) is disordered. Low complexity predominate over residues 41–51 (QSQSKSQSQSQ). An ATP-binding site is contributed by Lys-55. The segment at 59–78 (RLGTSNNLPRKKDGGENSTE) is disordered. Catalysis depends on Asp-179, which acts as the Proton acceptor. A helical membrane pass occupies residues 239–255 (MWSLGVILYILLSGYPP). Thr-279 is subject to Phosphothreonine. The interval 337–350 (ARRKLRAAAIASVW) is calmodulin-binding. The stretch at 358–379 (TKKLKSLVGSYDLKEDEIENLR) forms a coiled coil. EF-hand domains follow at residues 408-443 (SLIPFAARIFDLFDNNRDGTVDMREILCGFSSLKNS), 444-479 (KGEDALRLCFQMYDTDRSGCITKEEVASMLRALPYD), and 486-521 (TEPGKLDEIFDLMDANSDGKVTFDEFKAAMQRDSSL). Positions 421, 423, 425, 427, 432, 457, 459, 461, 463, 468, 499, 501, 503, 505, and 510 each coordinate Ca(2+).

The protein belongs to the protein kinase superfamily. CAMK Ser/Thr protein kinase family. CaMK subfamily. Post-translationally, autophosphorylation.

It localises to the membrane. The enzyme catalyses L-seryl-[protein] + ATP = O-phospho-L-seryl-[protein] + ADP + H(+). It catalyses the reaction L-threonyl-[protein] + ATP = O-phospho-L-threonyl-[protein] + ADP + H(+). Its activity is regulated as follows. Activated by calcium. Autophosphorylation may play an important role in the regulation of the kinase activity. In terms of biological role, protein kinase that recognizes the calcium spiking induced by Nod factors and translates this signal to components controlling nodulation and mycorrhizal infection responses. The sequence is that of Calcium and calcium/calmodulin-dependent serine/threonine-protein kinase (SYM9) from Pisum sativum (Garden pea).